Consider the following 255-residue polypeptide: PABIR family member 2 (255 aa).

Positions 1–24 (MAQEKMDLDFEADTSEGATLRRSN) are disordered. N-acetylalanine is present on A2. A phosphoserine mark is found at S25, S33, S50, and S58. T112 is subject to Phosphothreonine. Residues S115 and S119 each carry the phosphoserine modification. R122 bears the Omega-N-methylarginine mark. S145 carries the phosphoserine modification. Disordered regions lie at residues 169–196 (LGPL…SMLS) and 219–238 (SGLS…SPVA). The span at 174-184 (RKGEMEMESQP) shows a compositional bias: basic and acidic residues.

The protein belongs to the FAM122 family.

The chain is PABIR family member 2 from Mus musculus (Mouse).